Consider the following 199-residue polypeptide: Charged multivesicular body protein 1B1 (199 aa).

Residues 10–48 are a coiled coil; the sequence is NLKFAAKELNRSSKKCDKEEKAEKAKIKKAIQKGNMEVA. Positions 132-156 are interaction with IST1; sequence MEDTMSSTTTLTTPQNQVDMLLQEM. The disordered stretch occupies residues 167 to 199; sequence ELPQGQTGSVGTSVASAEQDELSQRLARLRDQV. Over residues 170–182 the composition is skewed to polar residues; that stretch reads QGQTGSVGTSVAS. The tract at residues 174 to 199 is interaction with SPAST; it reads GSVGTSVASAEQDELSQRLARLRDQV. The stretch at 178-199 forms a coiled coil; the sequence is TSVASAEQDELSQRLARLRDQV. The segment at 180–196 is interaction with VPS4A, MITD1 and STAMBP; sequence VASAEQDELSQRLARLR. Residues 180-199 form an interaction with VTA1 region; sequence VASAEQDELSQRLARLRDQV. Positions 183 to 199 are interaction with VPS4B; the sequence is AEQDELSQRLARLRDQV. The short motif at 186–196 is the MIT-interacting motif element; that stretch reads DELSQRLARLR.

This sequence belongs to the SNF7 family. In terms of assembly, probable peripherally associated component of the endosomal sorting required for transport complex III (ESCRT-III). ESCRT-III components are thought to multimerize to form a flat lattice on the perimeter membrane of the endosome. Several assembly forms of ESCRT-III may exist that interact and act sequentially. Interacts with CHMP1A. Interacts with VTA1; the interaction probably involves the open conformation of CHMP1B. Interacts with CHMP2A. Interacts with VPS4A; the interaction is direct. Interacts with VPS4B; the interaction is direct. Interacts with SPAST (via MIT domain); the interaction is direct. Interacts with IST1. Interacts with MITD1. Interacts with STAMBP.

It is found in the cytoplasm. The protein localises to the cytosol. Its subcellular location is the endosome. The protein resides in the late endosome membrane. Probable peripherally associated component of the endosomal sorting required for transport complex III (ESCRT-III) which is involved in multivesicular bodies (MVBs) formation and sorting of endosomal cargo proteins into MVBs. MVBs contain intraluminal vesicles (ILVs) that are generated by invagination and scission from the limiting membrane of the endosome and mostly are delivered to lysosomes enabling degradation of membrane proteins, such as stimulated growth factor receptors, lysosomal enzymes and lipids. The MVB pathway appears to require the sequential function of ESCRT-O, -I,-II and -III complexes. ESCRT-III proteins mostly dissociate from the invaginating membrane before the ILV is released. The ESCRT machinery also functions in topologically equivalent membrane fission events, such as the terminal stages of cytokinesis. ESCRT-III proteins are believed to mediate the necessary vesicle extrusion and/or membrane fission activities, possibly in conjunction with the AAA ATPase VPS4. Involved in cytokinesis. Involved in recruiting VPS4A and/or VPS4B and SPAST to the midbody of dividing cells. The sequence is that of Charged multivesicular body protein 1B1 from Mus musculus (Mouse).